The chain runs to 237 residues: Putative glutathione-dependent formaldehyde-activating enzyme (237 aa).

Residues 38–152 (ITLICHCPPS…LGQSGGSEGE (115 aa)) form the CENP-V/GFA domain. 7 residues coordinate Zn(2+): cysteine 42, cysteine 44, cysteine 67, cysteine 69, cysteine 72, cysteine 114, and cysteine 117.

This sequence belongs to the Gfa family. The cofactor is Zn(2+).

The enzyme catalyses S-(hydroxymethyl)glutathione = glutathione + formaldehyde. The protein operates within one-carbon metabolism; formaldehyde degradation; formate from formaldehyde (glutathione route): step 1/3. Its function is as follows. Catalyzes the condensation of formaldehyde and glutathione to S-hydroxymethylglutathione. In Sordaria macrospora (strain ATCC MYA-333 / DSM 997 / K(L3346) / K-hell), this protein is Putative glutathione-dependent formaldehyde-activating enzyme.